Here is a 563-residue protein sequence, read N- to C-terminus: Secreted lipase ARB07186/07185 (563 aa).

An N-terminal signal peptide occupies residues 1–20; that stretch reads MAKYDFVMLWILTLTAAIAA. Cys-83 and Cys-101 are oxidised to a cystine. The active-site Acyl-ester intermediate is the Ser-215. Cys-268 and Cys-281 are oxidised to a cystine.

Belongs to the type-B carboxylesterase/lipase family.

It localises to the secreted. The enzyme catalyses a triacylglycerol + H2O = a diacylglycerol + a fatty acid + H(+). The polypeptide is Secreted lipase ARB07186/07185 (Arthroderma benhamiae (strain ATCC MYA-4681 / CBS 112371) (Trichophyton mentagrophytes)).